The chain runs to 360 residues: Histidinol-phosphate aminotransferase (360 aa).

N6-(pyridoxal phosphate)lysine is present on K221.

Belongs to the class-II pyridoxal-phosphate-dependent aminotransferase family. Histidinol-phosphate aminotransferase subfamily. As to quaternary structure, homodimer. Requires pyridoxal 5'-phosphate as cofactor.

It catalyses the reaction L-histidinol phosphate + 2-oxoglutarate = 3-(imidazol-4-yl)-2-oxopropyl phosphate + L-glutamate. Its pathway is amino-acid biosynthesis; L-histidine biosynthesis; L-histidine from 5-phospho-alpha-D-ribose 1-diphosphate: step 7/9. The sequence is that of Histidinol-phosphate aminotransferase from Desulfitobacterium hafniense (strain Y51).